Consider the following 66-residue polypeptide: Beta-mammal toxin Cv1 (66 aa).

The region spanning 1-66 (KEGYIVNLST…VWPLPKKTCN (66 aa)) is the LCN-type CS-alpha/beta domain. 4 cysteine pairs are disulfide-bonded: Cys12–Cys65, Cys16–Cys41, Cys25–Cys46, and Cys29–Cys48.

In terms of tissue distribution, expressed by the venom gland.

The protein resides in the secreted. Is susceptible to be neutralized by human antibodies scFvs 10FG2 and HV. Beta toxins bind voltage-independently at site-4 of sodium channels (Nav) and reduces peak current and shifts the voltage of activation toward more negative potentials thereby affecting sodium channel activation and promoting spontaneous and repetitive firing. This toxin is slightly toxic to mice. This Centruroides villegasi (Scorpion) protein is Beta-mammal toxin Cv1.